We begin with the raw amino-acid sequence, 291 residues long: 33 kDa chaperonin (291 aa).

2 disulfide bridges follow: C235/C237 and C268/C271.

It belongs to the HSP33 family. Post-translationally, under oxidizing conditions two disulfide bonds are formed involving the reactive cysteines. Under reducing conditions zinc is bound to the reactive cysteines and the protein is inactive.

It is found in the cytoplasm. Its function is as follows. Redox regulated molecular chaperone. Protects both thermally unfolding and oxidatively damaged proteins from irreversible aggregation. Plays an important role in the bacterial defense system toward oxidative stress. The polypeptide is 33 kDa chaperonin (Streptococcus agalactiae serotype Ia (strain ATCC 27591 / A909 / CDC SS700)).